The chain runs to 601 residues: ATP-dependent lipid A-core flippase (601 aa).

The 301-residue stretch at 28–328 (LLSVCGLIVY…LTRVNAEFQR (301 aa)) folds into the ABC transmembrane type-1 domain. A run of 6 helical transmembrane segments spans residues 32-52 (CGLI…GPFI), 81-101 (VLLM…FANF), 160-180 (ALIS…LMFY), 183-203 (WKLS…ITIV), 267-287 (AVSQ…VLYA), and 296-316 (DLTA…LQPI). The 238-residue stretch at 360–597 (LRFDNVSFSY…GGMYAKLYQM (238 aa)) folds into the ABC transporter domain. An ATP-binding site is contributed by 394-401 (GRSGSGKS).

Belongs to the ABC transporter superfamily. Lipid exporter (TC 3.A.1.106) family. As to quaternary structure, homodimer.

The protein localises to the cell inner membrane. The enzyme catalyses ATP + H2O + lipid A-core oligosaccharideSide 1 = ADP + phosphate + lipid A-core oligosaccharideSide 2.. Involved in lipopolysaccharide (LPS) biosynthesis. Translocates lipid A-core from the inner to the outer leaflet of the inner membrane. Transmembrane domains (TMD) form a pore in the inner membrane and the ATP-binding domain (NBD) is responsible for energy generation. This Shewanella sp. (strain MR-4) protein is ATP-dependent lipid A-core flippase.